The sequence spans 190 residues: NADH-quinone oxidoreductase subunit B (190 aa).

4 residues coordinate [4Fe-4S] cluster: C69, C70, C134, and C164.

The protein belongs to the complex I 20 kDa subunit family. In terms of assembly, NDH-1 is composed of 14 different subunits. Subunits NuoB, C, D, E, F, and G constitute the peripheral sector of the complex. [4Fe-4S] cluster serves as cofactor.

The protein localises to the cell inner membrane. It carries out the reaction a quinone + NADH + 5 H(+)(in) = a quinol + NAD(+) + 4 H(+)(out). NDH-1 shuttles electrons from NADH, via FMN and iron-sulfur (Fe-S) centers, to quinones in the respiratory chain. Couples the redox reaction to proton translocation (for every two electrons transferred, four hydrogen ions are translocated across the cytoplasmic membrane), and thus conserves the redox energy in a proton gradient. The chain is NADH-quinone oxidoreductase subunit B from Hyphomonas neptunium (strain ATCC 15444).